Consider the following 408-residue polypeptide: Aminoacylase-1 (408 aa).

His80 contributes to the Zn(2+) binding site. Asp82 is a catalytic residue. Asp113 contributes to the Zn(2+) binding site. Glu147 acts as the Proton acceptor in catalysis. The Zn(2+) site is built by Glu148, Glu175, and His373.

The protein belongs to the peptidase M20A family. Homodimer. Interacts with SPHK1. Requires Zn(2+) as cofactor. In terms of tissue distribution, expression is highest in kidney, strong in brain and weaker in placenta and spleen.

Its subcellular location is the cytoplasm. It carries out the reaction an N-acyl-L-amino acid + H2O = an L-alpha-amino acid + a carboxylate. The enzyme catalyses N-acetyl-L-methionine + H2O = L-methionine + acetate. The catalysed reaction is N-acetyl-L-glutamine + H2O = L-glutamine + acetate. Catalyzes the hydrolysis of N-acetylated amino acids to acetate and free amino acids. In Homo sapiens (Human), this protein is Aminoacylase-1 (ACY1).